The following is a 169-amino-acid chain: Ferric-chelate reductase (NAD(P)H) (169 aa).

NADP(+) is bound at residue tyrosine 7. FMN contacts are provided by residues glutamine 27 to threonine 31, cysteine 45 to threonine 52, arginine 82 to serine 84, and lysine 89. Residues histidine 126 and tyrosine 147–lysine 154 each bind NADP(+).

This sequence belongs to the non-flavoprotein flavin reductase family. As to quaternary structure, homodimer. FMN serves as cofactor. It depends on FAD as a cofactor.

The catalysed reaction is 2 a Fe(II)-siderophore + NAD(+) + H(+) = 2 a Fe(III)-siderophore + NADH. It catalyses the reaction 2 a Fe(II)-siderophore + NADP(+) + H(+) = 2 a Fe(III)-siderophore + NADPH. Catalyzes the reduction of bound ferric iron (Fe(3+)) in a variety of iron chelators (siderophores) using NAD(P)H as the electron donor, resulting in the release of Fe(2+). Not active with uncomplexed Fe(3+). Also reduces FMN and FAD, but not riboflavin. In Archaeoglobus fulgidus (strain ATCC 49558 / DSM 4304 / JCM 9628 / NBRC 100126 / VC-16), this protein is Ferric-chelate reductase (NAD(P)H).